A 284-amino-acid polypeptide reads, in one-letter code: ATP phosphoribosyltransferase (284 aa).

The protein belongs to the ATP phosphoribosyltransferase family. Long subfamily. Equilibrium between an active dimeric form, an inactive hexameric form and higher aggregates. Interconversion between the various forms is largely reversible and is influenced by the natural substrates and inhibitors of the enzyme. The cofactor is Mg(2+).

It is found in the cytoplasm. It catalyses the reaction 1-(5-phospho-beta-D-ribosyl)-ATP + diphosphate = 5-phospho-alpha-D-ribose 1-diphosphate + ATP. Its pathway is amino-acid biosynthesis; L-histidine biosynthesis; L-histidine from 5-phospho-alpha-D-ribose 1-diphosphate: step 1/9. Its activity is regulated as follows. Feedback inhibited by histidine. Catalyzes the condensation of ATP and 5-phosphoribose 1-diphosphate to form N'-(5'-phosphoribosyl)-ATP (PR-ATP). Has a crucial role in the pathway because the rate of histidine biosynthesis seems to be controlled primarily by regulation of HisG enzymatic activity. The sequence is that of ATP phosphoribosyltransferase (hisG) from Mycobacterium bovis (strain ATCC BAA-935 / AF2122/97).